The primary structure comprises 274 residues: Undecaprenyl-diphosphatase (274 aa).

The next 8 helical transmembrane spans lie at 1–21 (MDWL…FLPI), 42–62 (VKDT…LVYY), 81–101 (LWLG…LFGD), 107–127 (LFRP…MWLL), 142–162 (ISAG…LWPG), 184–204 (TKFS…LDFI), 213–233 (IGVV…YFAI), and 248–268 (FAVY…RGVL).

The protein belongs to the UppP family.

It localises to the cell membrane. It catalyses the reaction di-trans,octa-cis-undecaprenyl diphosphate + H2O = di-trans,octa-cis-undecaprenyl phosphate + phosphate + H(+). Functionally, catalyzes the dephosphorylation of undecaprenyl diphosphate (UPP). Confers resistance to bacitracin. This Deinococcus radiodurans (strain ATCC 13939 / DSM 20539 / JCM 16871 / CCUG 27074 / LMG 4051 / NBRC 15346 / NCIMB 9279 / VKM B-1422 / R1) protein is Undecaprenyl-diphosphatase.